Consider the following 98-residue polypeptide: Integration host factor subunit alpha (98 aa).

Residues 49 to 72 (FGNFDLRDKNQRPGRNPKTGEDIP) are disordered.

It belongs to the bacterial histone-like protein family. Heterodimer of an alpha and a beta chain.

This protein is one of the two subunits of integration host factor, a specific DNA-binding protein that functions in genetic recombination as well as in transcriptional and translational control. This chain is Integration host factor subunit alpha, found in Shewanella loihica (strain ATCC BAA-1088 / PV-4).